The primary structure comprises 700 residues: Acetyl-coenzyme A carboxylase carboxyl transferase subunit beta, chloroplastic (700 aa).

Residues Cys-34, Cys-37, Cys-53, and Cys-56 each contribute to the Zn(2+) site. A C4-type zinc finger spans residues 34–56 (CENCETLIYKKSLLEQKGVCAEC). In terms of domain architecture, CoA carboxyltransferase N-terminal spans 445–700 (KKGRDTKDTE…ETIEIYMYGD (256 aa)).

It belongs to the AccD/PCCB family. As to quaternary structure, acetyl-CoA carboxylase is a heterohexamer composed of biotin carboxyl carrier protein, biotin carboxylase and 2 subunits each of ACCase subunit alpha and ACCase plastid-coded subunit beta (accD). It depends on Zn(2+) as a cofactor.

The protein resides in the plastid. It is found in the chloroplast stroma. The enzyme catalyses N(6)-carboxybiotinyl-L-lysyl-[protein] + acetyl-CoA = N(6)-biotinyl-L-lysyl-[protein] + malonyl-CoA. Its pathway is lipid metabolism; malonyl-CoA biosynthesis; malonyl-CoA from acetyl-CoA: step 1/1. Functionally, component of the acetyl coenzyme A carboxylase (ACC) complex. Biotin carboxylase (BC) catalyzes the carboxylation of biotin on its carrier protein (BCCP) and then the CO(2) group is transferred by the transcarboxylase to acetyl-CoA to form malonyl-CoA. The protein is Acetyl-coenzyme A carboxylase carboxyl transferase subunit beta, chloroplastic of Cryptomeria japonica (Japanese cedar).